We begin with the raw amino-acid sequence, 731 residues long: Beta-galactosidase (731 aa).

Residues 1-23 form the signal peptide; it reads MGVGIQTMWSILLLFSCIFSAAS. The Proton donor role is filled by E182. Catalysis depends on E251, which acts as the Nucleophile. A glycan (N-linked (GlcNAc...) asparagine) is linked at N459.

It belongs to the glycosyl hydrolase 35 family.

It is found in the secreted. Its subcellular location is the extracellular space. The protein resides in the apoplast. The enzyme catalyses Hydrolysis of terminal non-reducing beta-D-galactose residues in beta-D-galactosides.. In terms of biological role, involved in cell wall degradation. Degrades polysaccharides containing beta-(1--&gt;4)-linked galactans, acting as an exo-(1--&gt;4)-beta-D-galactanase. This chain is Beta-galactosidase, found in Malus domestica (Apple).